Reading from the N-terminus, the 732-residue chain is Trehalose phosphorylase (732 aa).

A propeptide spanning residues 1–25 (MAPPHQFQSKPSDVIRRRLSSAVSS) is cleaved from the precursor.

This sequence belongs to the glycosyltransferase group 1 family. Glycosyltransferase 4 subfamily. In terms of assembly, homodimer.

The catalysed reaction is alpha,alpha-trehalose + phosphate = alpha-D-glucose + alpha-D-glucose 1-phosphate. Activity abolished by 1 mM Cu(2+). 0.1 mM Cu(2+) reduces trehalose phosphorolysis to 76% and trehalose synthesis to 48% of maximum activity. 1 mM Zn(2+) abolishes trehalose synthesis, and reduces trehalose phosphorolysis to 40% of maximum activity. Unaffected by EDTA. Its function is as follows. Reversibly catalyzes the synthesis and degradation of trehalose from glucose and alpha-D-glucose 1-phosphate. The equilibrium lies in the direction of trehalose synthesis. The polypeptide is Trehalose phosphorylase (Grifola frondosa (Maitake)).